The following is a 705-amino-acid chain: Elongation factor G (705 aa).

The tr-type G domain maps to 8–290 (HRYRNIGIMA…GVIHLLPSPA (283 aa)). GTP contacts are provided by residues 17–24 (AHIDAGKT), 88–92 (DTPGH), and 142–145 (NKMD).

This sequence belongs to the TRAFAC class translation factor GTPase superfamily. Classic translation factor GTPase family. EF-G/EF-2 subfamily.

Its subcellular location is the cytoplasm. Catalyzes the GTP-dependent ribosomal translocation step during translation elongation. During this step, the ribosome changes from the pre-translocational (PRE) to the post-translocational (POST) state as the newly formed A-site-bound peptidyl-tRNA and P-site-bound deacylated tRNA move to the P and E sites, respectively. Catalyzes the coordinated movement of the two tRNA molecules, the mRNA and conformational changes in the ribosome. This chain is Elongation factor G, found in Xylella fastidiosa (strain M12).